A 417-amino-acid chain; its full sequence is RH-like protein IA (417 aa).

Transmembrane regions (helical) follow at residues 12–32 (CLPL…YFFT), 44–64 (LVAS…GFGF), 77–97 (VAFS…LDGF), 125–145 (ISVD…MVLV), 172–192 (IYVF…KPLP), 203–223 (TIPS…WPSF), 238–258 (VFNT…GSSL), 265–285 (ISMS…GTSC), 287–307 (LITS…ISIG), 331–351 (NFSL…VHHT), and 358–378 (MIGF…TIAL).

The protein belongs to the ammonium transporter (TC 2.A.49) family. Rh subfamily.

The protein localises to the membrane. In terms of biological role, may be part of an oligomeric complex which is likely to have a transport or channel function in the erythrocyte membrane. The chain is RH-like protein IA from Pan troglodytes (Chimpanzee).